A 204-amino-acid chain; its full sequence is 3-isopropylmalate dehydratase small subunit (204 aa).

It belongs to the LeuD family. LeuD type 1 subfamily. In terms of assembly, heterodimer of LeuC and LeuD.

It catalyses the reaction (2R,3S)-3-isopropylmalate = (2S)-2-isopropylmalate. The protein operates within amino-acid biosynthesis; L-leucine biosynthesis; L-leucine from 3-methyl-2-oxobutanoate: step 2/4. Catalyzes the isomerization between 2-isopropylmalate and 3-isopropylmalate, via the formation of 2-isopropylmaleate. This chain is 3-isopropylmalate dehydratase small subunit, found in Chloroflexus aggregans (strain MD-66 / DSM 9485).